The following is a 269-amino-acid chain: Propanediol uptake facilitator PduF (269 aa).

2 helical membrane-spanning segments follow: residues 10–30 (IAEFLGTGLFLFFGIGCLSAL) and 42–62 (ICIIWGLGISLAVYLTAGISG). The NPA 1 signature appears at 66–68 (NPA). The next 3 membrane-spanning stretches (helical) occupy residues 69 to 89 (ITIALWLFACFPGRKVLPYTV), 143 to 163 (VWQAALVEVVITSILMGMIMA), and 179 to 199 (LLIGILVAVIGASTGPLTGFA). The NPA 2 signature appears at 201–203 (NPA). A helical membrane pass occupies residues 228-248 (IPYFIVPIVAPIIGACAGAAI).

Belongs to the MIP/aquaporin (TC 1.A.8) family.

The protein localises to the cell inner membrane. Functionally, probably facilitates diffusion of 1,2-propanediol (1,2-PD) into the cell. This chain is Propanediol uptake facilitator PduF, found in Citrobacter freundii.